The chain runs to 314 residues: DNA-directed RNA polymerase subunit alpha (314 aa).

The tract at residues 1–228 (MAQYTIECVE…DQLRPLQEIT (228 aa)) is alpha N-terminal domain (alpha-NTD). The tract at residues 241-314 (NTVGQVPIEE…SLPKDKPARS (74 aa)) is alpha C-terminal domain (alpha-CTD).

The protein belongs to the RNA polymerase alpha chain family. In cyanobacteria the RNAP catalytic core is composed of 2 alpha, 1 beta, 1 beta', 1 gamma and 1 omega subunit. When a sigma factor is associated with the core the holoenzyme is formed, which can initiate transcription.

The catalysed reaction is RNA(n) + a ribonucleoside 5'-triphosphate = RNA(n+1) + diphosphate. Its function is as follows. DNA-dependent RNA polymerase catalyzes the transcription of DNA into RNA using the four ribonucleoside triphosphates as substrates. This chain is DNA-directed RNA polymerase subunit alpha, found in Gloeobacter violaceus (strain ATCC 29082 / PCC 7421).